The sequence spans 204 residues: uncharacterized protein (204 aa).

Residues 109–136 (QFDIDVHKDQIEKLKDLYKALLRIAETT) are a coiled coil.

This is an uncharacterized protein from Bacillus subtilis (strain 168).